Reading from the N-terminus, the 92-residue chain is uncharacterized protein (92 aa).

This is an uncharacterized protein from Bacillus subtilis (strain 168).